The following is a 139-amino-acid chain: Small ribosomal subunit protein uS12 (139 aa).

A 3-methylthioaspartic acid modification is found at D102.

The protein belongs to the universal ribosomal protein uS12 family. As to quaternary structure, part of the 30S ribosomal subunit. Contacts proteins S8 and S17. May interact with IF1 in the 30S initiation complex.

Functionally, with S4 and S5 plays an important role in translational accuracy. In terms of biological role, interacts with and stabilizes bases of the 16S rRNA that are involved in tRNA selection in the A site and with the mRNA backbone. Located at the interface of the 30S and 50S subunits, it traverses the body of the 30S subunit contacting proteins on the other side and probably holding the rRNA structure together. The combined cluster of proteins S8, S12 and S17 appears to hold together the shoulder and platform of the 30S subunit. This chain is Small ribosomal subunit protein uS12, found in Phytoplasma australiense.